The chain runs to 449 residues: Phosphoglucosamine mutase (449 aa).

Ser101 (phosphoserine intermediate) is an active-site residue. Mg(2+)-binding residues include Ser101, Asp241, Asp243, and Asp245. Phosphoserine is present on Ser101.

This sequence belongs to the phosphohexose mutase family. The cofactor is Mg(2+). Activated by phosphorylation.

The enzyme catalyses alpha-D-glucosamine 1-phosphate = D-glucosamine 6-phosphate. Catalyzes the conversion of glucosamine-6-phosphate to glucosamine-1-phosphate. This is Phosphoglucosamine mutase from Ruminiclostridium cellulolyticum (strain ATCC 35319 / DSM 5812 / JCM 6584 / H10) (Clostridium cellulolyticum).